The following is a 245-amino-acid chain: 1-(5-phosphoribosyl)-5-[(5-phosphoribosylamino)methylideneamino] imidazole-4-carboxamide isomerase (245 aa).

Aspartate 7 acts as the Proton acceptor in catalysis. The active-site Proton donor is aspartate 129.

It belongs to the HisA/HisF family.

It localises to the cytoplasm. It carries out the reaction 1-(5-phospho-beta-D-ribosyl)-5-[(5-phospho-beta-D-ribosylamino)methylideneamino]imidazole-4-carboxamide = 5-[(5-phospho-1-deoxy-D-ribulos-1-ylimino)methylamino]-1-(5-phospho-beta-D-ribosyl)imidazole-4-carboxamide. The protein operates within amino-acid biosynthesis; L-histidine biosynthesis; L-histidine from 5-phospho-alpha-D-ribose 1-diphosphate: step 4/9. This chain is 1-(5-phosphoribosyl)-5-[(5-phosphoribosylamino)methylideneamino] imidazole-4-carboxamide isomerase, found in Escherichia coli O6:K15:H31 (strain 536 / UPEC).